The primary structure comprises 607 residues: UvrABC system protein C (607 aa).

One can recognise a GIY-YIG domain in the interval 16 to 94 (GRPGVYRMFD…IKEWRPPYNI (79 aa)). The UVR domain occupies 203–238 (NALSDELNASMEKAAMALDFERAAELRDQVALLRRV).

The protein belongs to the UvrC family. As to quaternary structure, interacts with UvrB in an incision complex.

It is found in the cytoplasm. Its function is as follows. The UvrABC repair system catalyzes the recognition and processing of DNA lesions. UvrC both incises the 5' and 3' sides of the lesion. The N-terminal half is responsible for the 3' incision and the C-terminal half is responsible for the 5' incision. The chain is UvrABC system protein C from Pseudomonas syringae pv. syringae (strain B728a).